Reading from the N-terminus, the 809-residue chain is DNA replication helicase (809 aa).

ATP is bound at residue 72–79; that stretch reads GTAGAGKS.

This sequence belongs to the herpesviridae helicase family. As to quaternary structure, associates with the primase and the primase-associated factor to form the helicase-primase complex.

It is found in the host nucleus. Functionally, component of the helicase/primase complex. Unwinds the DNA at the replication forks and generates single-stranded DNA for both leading and lagging strand synthesis. The primase synthesizes short RNA primers on the lagging strand that the polymerase elongates using dNTPs. Possesses helicase-like motifs and therefore may act as the helicase subunit of the complex. The chain is DNA replication helicase from Epstein-Barr virus (strain B95-8) (HHV-4).